The sequence spans 589 residues: Aspartate--tRNA ligase (589 aa).

Position 175 (E175) interacts with L-aspartate. The aspartate stretch occupies residues 199–202 (QIFK). Residue R221 participates in L-aspartate binding. ATP contacts are provided by residues 221 to 223 (RDE) and Q230. L-aspartate is bound at residue H449. Residue E483 coordinates ATP. R490 serves as a coordination point for L-aspartate. An ATP-binding site is contributed by 535 to 538 (GLDR).

Belongs to the class-II aminoacyl-tRNA synthetase family. Type 1 subfamily. In terms of assembly, homodimer.

The protein resides in the cytoplasm. The catalysed reaction is tRNA(Asp) + L-aspartate + ATP = L-aspartyl-tRNA(Asp) + AMP + diphosphate. Functionally, catalyzes the attachment of L-aspartate to tRNA(Asp) in a two-step reaction: L-aspartate is first activated by ATP to form Asp-AMP and then transferred to the acceptor end of tRNA(Asp). The polypeptide is Aspartate--tRNA ligase (Shouchella clausii (strain KSM-K16) (Alkalihalobacillus clausii)).